The primary structure comprises 374 residues: Cobalt-precorrin-5B C(1)-methyltransferase (374 aa).

This sequence belongs to the CbiD family.

The catalysed reaction is Co-precorrin-5B + S-adenosyl-L-methionine = Co-precorrin-6A + S-adenosyl-L-homocysteine. Its pathway is cofactor biosynthesis; adenosylcobalamin biosynthesis; cob(II)yrinate a,c-diamide from sirohydrochlorin (anaerobic route): step 6/10. Catalyzes the methylation of C-1 in cobalt-precorrin-5B to form cobalt-precorrin-6A. The chain is Cobalt-precorrin-5B C(1)-methyltransferase from Synechococcus elongatus (strain ATCC 33912 / PCC 7942 / FACHB-805) (Anacystis nidulans R2).